The primary structure comprises 141 residues: Nucleoside diphosphate kinase (141 aa).

Residues lysine 9, phenylalanine 57, arginine 85, threonine 91, arginine 102, and asparagine 112 each coordinate ATP. Histidine 115 (pros-phosphohistidine intermediate) is an active-site residue.

Belongs to the NDK family. As to quaternary structure, homotetramer. Requires Mg(2+) as cofactor.

The protein localises to the cytoplasm. The catalysed reaction is a 2'-deoxyribonucleoside 5'-diphosphate + ATP = a 2'-deoxyribonucleoside 5'-triphosphate + ADP. It catalyses the reaction a ribonucleoside 5'-diphosphate + ATP = a ribonucleoside 5'-triphosphate + ADP. Functionally, major role in the synthesis of nucleoside triphosphates other than ATP. The ATP gamma phosphate is transferred to the NDP beta phosphate via a ping-pong mechanism, using a phosphorylated active-site intermediate. The polypeptide is Nucleoside diphosphate kinase (Chlamydia abortus (strain DSM 27085 / S26/3) (Chlamydophila abortus)).